A 180-amino-acid chain; its full sequence is Large ribosomal subunit protein uL5 (180 aa).

It belongs to the universal ribosomal protein uL5 family. As to quaternary structure, part of the 50S ribosomal subunit; part of the 5S rRNA/L5/L18/L25 subcomplex. Contacts the 5S rRNA and the P site tRNA. Forms a bridge to the 30S subunit in the 70S ribosome.

In terms of biological role, this is one of the proteins that bind and probably mediate the attachment of the 5S RNA into the large ribosomal subunit, where it forms part of the central protuberance. In the 70S ribosome it contacts protein S13 of the 30S subunit (bridge B1b), connecting the 2 subunits; this bridge is implicated in subunit movement. Contacts the P site tRNA; the 5S rRNA and some of its associated proteins might help stabilize positioning of ribosome-bound tRNAs. This is Large ribosomal subunit protein uL5 from Solibacter usitatus (strain Ellin6076).